A 707-amino-acid polypeptide reads, in one-letter code: MYAILAEKPSAAKAYAQALNGKRQGRIYVAPPSSLLPEGALICAAVGHILEFLEPGELNEKYKSYSLDSLPIIIDLFQYKVVSDKKEVLQRIKDTIFDKRVKTIILATDAAAEGEYIGRNILYRLQCKKTIKRLWTSSMTATSIQKAFSQLKADAETLPLYYQAKARAESDYMIGLTLSRAYGILLKEQGIVPHNTTISLGRVQTPLLAEIVKRERLIEQFTAENFWTVKATFNNQGNVYEGEWFHEKENRIFKEEQAEQLCELVRNQSSTIMEMKEEMRTYQPPLLYXLSTLQMDAGNAFGFKPAETLKYAQSLYDKGYLSYPRTQDERITESDARELENNIQFLSGHDTFGALFPLPVSTLMNNKRYIGEVTDHHALLITDKIPKDKDLSEDEKSIYHLVVKRILAAHYPDVAMSHKEIITKVMDRFTFRSKGKELLSKGWHHIIPPTNENDIMLPTLLKGSEGVVTDTLTTKSKTKPPNRYTSSSLIGFMKNAAQAIEDEDRKSISNLPLGTEATRAGLITLLESRKYIEWKKNKVYPTLLGITVVDSIKRGSVIKSPILTAKWDVKLNEIGASLYNHKDFIAHSKKLSSVLFEEVKTYSSTWNQNGVERIKSESIGACLLCGSNVVLRKGKHGEFYGCSNYKDSGCTFNLPFKVLNKKLSKKQLMELLKNEKTDIIKGFKWKDKTFNAPLVWNREDQKVQFGK.

In terms of domain architecture, Toprim spans methionine 1–threonine 140. The Topo IA-type catalytic domain maps to threonine 157–phenylalanine 596. Residues serine 199–glutamine 204 are interaction with DNA. Tyrosine 323 functions as the O-(5'-phospho-DNA)-tyrosine intermediate in the catalytic mechanism.

The protein belongs to the type IA topoisomerase family. Monomer.

It catalyses the reaction ATP-independent breakage of single-stranded DNA, followed by passage and rejoining.. Its function is as follows. Releases the supercoiling and torsional tension of DNA, which is introduced during the DNA replication and transcription, by transiently cleaving and rejoining one strand of the DNA duplex. Introduces a single-strand break via transesterification at a target site in duplex DNA. The scissile phosphodiester is attacked by the catalytic tyrosine of the enzyme, resulting in the formation of a DNA-(5'-phosphotyrosyl)-enzyme intermediate and the expulsion of a 3'-OH DNA strand. The free DNA strand then undergoes passage around the unbroken strand, thus removing DNA supercoils. Finally, in the religation step, the DNA 3'-OH attacks the covalent intermediate to expel the active-site tyrosine and restore the DNA phosphodiester backbone. The sequence is that of DNA topoisomerase 1 (topA) from Alkalihalophilus pseudofirmus (strain ATCC BAA-2126 / JCM 17055 / OF4) (Bacillus pseudofirmus).